Consider the following 69-residue polypeptide: Regulatory protein MokC (69 aa).

Residues 24 to 44 (KAMIVALIVICITAVVAALVT) form a helical membrane-spanning segment.

This sequence belongs to the Hok/Gef family.

It is found in the cell inner membrane. Its function is as follows. Might be the toxic component of a type I toxin-antitoxin (TA) system. Regulatory peptide which completely overlaps hokC and enables hokC expression. The polypeptide is Regulatory protein MokC (mokC) (Escherichia coli (strain K12)).